Reading from the N-terminus, the 957-residue chain is SLIT and NTRK-like protein 5 (957 aa).

Positions 1-40 (MHVCCPPVTLEQDLHRKMHSWMLQTLAFAVTSLVLSCAET) are cleaved as a signal peptide. Residues 41–664 (IDYYGEICDN…GTGASSVPLS (624 aa)) lie on the Extracellular side of the membrane. LRR repeat units lie at residues 82 to 103 (PIYHLLLSGNLLSRLYPNEFVN), 106 to 127 (GASILHLGSNVIQDIETGAFHG), 130 to 151 (GLRRLHLNNNKLELLRDDTFLG), 154 to 175 (NLEYLQVDYNYISVIEPNAFGK), 178 to 199 (MLQVLILNDNLLSGLPNNLFRF), and 201 to 222 (PLTHLDLRGNRLKLLPYVGLLQ). Asn-103 is a glycosylation site (N-linked (GlcNAc...) asparagine). An LRRCT 1 domain is found at 235–286 (NPWNCSCELISLKDWLDSISYSALVGDVVCETPFRLHGRDLDEVSKQELCPR). Residues 317 to 358 (ATSSSAVYKPPLKPPKGTRQPNKPRVRPTSRQPSKDLGYSNY) are disordered. The region spanning 365 to 407 (QTKSPVPLECPTACTCNLQISDLGLNVNCQERKIESIAELQPK) is the LRRNT domain. 6 LRR repeats span residues 410 to 431 (NPKKMYLTENYITVVRRTDFLE), 434 to 455 (GLDLLHLGNNRISMIQDRAFGD), 458 to 479 (NLRRLYLNGNRIERLSPELFYG), 482 to 503 (SLQYLFLQYNLIREIQAGTFDP), 506 to 527 (NLQLLFLNNNQLQAMPSGVFSG), and 529 to 550 (TLLRLNLRGNSFTSLPVSGVLD). Positions 563–614 (NPWDCTCDVVGMKLWIEQLKVGVLVDEVICKAPKKFAETYMRSIKSELLCPD) constitute an LRRCT 2 domain. The segment covering 623-632 (PTPSSIQVPS) has biased composition (low complexity). Positions 623-642 (PTPSSIQVPSRTNAATPAVR) are disordered. The N-linked (GlcNAc...) asparagine glycan is linked to Asn-644. The chain crosses the membrane as a helical span at residues 665-685 (VLILSLLLVFIMSVFVAAGLF). Topologically, residues 686–957 (VLVMKRRKKN…LEKQTTFSQF (272 aa)) are cytoplasmic. Residues 789 to 844 (SNHHLQQQPPPPPQQPQQQPPPQMQMQPGEEERRESHHLRSPAYSVSTIEPREDLL) are disordered. The segment covering 796-811 (QPPPPPQQPQQQPPPQ) has biased composition (pro residues).

It belongs to the SLITRK family. In terms of tissue distribution, in the adult, significant expression is detected only in the brain. In the embryo, expressed in the subventricular zone, cortical plate, pyramidal layer of hippocampus, thalamus and hypothalamus.

The protein localises to the membrane. Its function is as follows. Suppresses neurite outgrowth. This Mus musculus (Mouse) protein is SLIT and NTRK-like protein 5 (Slitrk5).